Consider the following 183-residue polypeptide: MTAMAGEVVEILSADDLRRTLTRLASQVVEKARDALDKLVLLGIHTRGVPLAKLLGQQVEQLEGASLPIGELDITFYRDDLDRIGPRTPRQTLIPVDLSGRIVVLVDDVIFSGRTIRSALNAVHDYGRPNAIWLLALIDRGHRELPIHPDFTGKALPTARDEVVKVLLQGIDQRDGVELWKPS.

Residues 46 to 47 (TR), Arg87, 107 to 115 (DDVIFSGRT), Arg140, and Val164 contribute to the substrate site. Positions 103–115 (VVLVDDVIFSGRT) match the PRPP-binding motif.

The protein belongs to the purine/pyrimidine phosphoribosyltransferase family. PyrR subfamily.

The enzyme catalyses UMP + diphosphate = 5-phospho-alpha-D-ribose 1-diphosphate + uracil. Functionally, regulates the transcription of the pyrimidine nucleotide (pyr) operon in response to exogenous pyrimidines. Also displays a weak uracil phosphoribosyltransferase activity which is not physiologically significant. This Thermosynechococcus vestitus (strain NIES-2133 / IAM M-273 / BP-1) protein is Bifunctional protein PyrR.